The following is a 790-amino-acid chain: Endonuclease MutS2 (790 aa).

Position 334 to 341 (334 to 341 (GPNTGGKT)) interacts with ATP. A Smr domain is found at 715–790 (IDVRGQNLEE…GMGVTIVHLK (76 aa)).

Belongs to the DNA mismatch repair MutS family. MutS2 subfamily. Homodimer. Binds to stalled ribosomes, contacting rRNA.

In terms of biological role, endonuclease that is involved in the suppression of homologous recombination and thus may have a key role in the control of bacterial genetic diversity. Acts as a ribosome collision sensor, splitting the ribosome into its 2 subunits. Detects stalled/collided 70S ribosomes which it binds and splits by an ATP-hydrolysis driven conformational change. Acts upstream of the ribosome quality control system (RQC), a ribosome-associated complex that mediates the extraction of incompletely synthesized nascent chains from stalled ribosomes and their subsequent degradation. Probably generates substrates for RQC. This Alkaliphilus oremlandii (strain OhILAs) (Clostridium oremlandii (strain OhILAs)) protein is Endonuclease MutS2.